The following is a 392-amino-acid chain: Anhydro-N-acetylmuramic acid kinase (392 aa).

19–26 (GTSVDGID) serves as a coordination point for ATP.

This sequence belongs to the anhydro-N-acetylmuramic acid kinase family.

The catalysed reaction is 1,6-anhydro-N-acetyl-beta-muramate + ATP + H2O = N-acetyl-D-muramate 6-phosphate + ADP + H(+). The protein operates within amino-sugar metabolism; 1,6-anhydro-N-acetylmuramate degradation. It participates in cell wall biogenesis; peptidoglycan recycling. Catalyzes the specific phosphorylation of 1,6-anhydro-N-acetylmuramic acid (anhMurNAc) with the simultaneous cleavage of the 1,6-anhydro ring, generating MurNAc-6-P. Is required for the utilization of anhMurNAc either imported from the medium or derived from its own cell wall murein, and thus plays a role in cell wall recycling. In Trichormus variabilis (strain ATCC 29413 / PCC 7937) (Anabaena variabilis), this protein is Anhydro-N-acetylmuramic acid kinase.